Here is a 338-residue protein sequence, read N- to C-terminus: uncharacterized protein (338 aa).

Residues 1-29 form the signal peptide; that stretch reads MIKQLYKNITICTLALSTTFTVLPATSYA.

It belongs to the aerolysin family.

This is an uncharacterized protein from Staphylococcus aureus (strain MSSA476).